The following is a 151-amino-acid chain: MNPLRKKRLLIILAILVGVGIAVGLALSALKENINLFYTPTQIANGEAPLDTRIRAGGMVQAGSLQRSADSLDVKFVVTDFNKSVTITYRGILPDLFREGQGIVALGKLNADGVVVADEVLAKHDEKYMPPEVTKALKDSGQSAPTPAKEG.

At 1-8 (MNPLRKKR) the chain is on the cytoplasmic side. The helical; Signal-anchor for type II membrane protein transmembrane segment at 9–29 (LLIILAILVGVGIAVGLALSA) threads the bilayer. Residues 30-151 (LKENINLFYT…QSAPTPAKEG (122 aa)) lie on the Periplasmic side of the membrane. Heme-binding residues include H124 and Y128. The interval 131–151 (PEVTKALKDSGQSAPTPAKEG) is disordered.

This sequence belongs to the CcmE/CycJ family.

The protein localises to the cell inner membrane. In terms of biological role, heme chaperone required for the biogenesis of c-type cytochromes. Transiently binds heme delivered by CcmC and transfers the heme to apo-cytochromes in a process facilitated by CcmF and CcmH. The protein is Cytochrome c-type biogenesis protein CcmE of Pseudomonas fluorescens (strain ATCC BAA-477 / NRRL B-23932 / Pf-5).